A 193-amino-acid chain; its full sequence is Protein B4 (193 aa).

Helical transmembrane passes span 15-35 (FFVC…CVFF), 36-56 (CVYF…VFFV), and 160-180 (LSLC…IVFS).

Its subcellular location is the host membrane. This Homo sapiens (Human) protein is Protein B4 (B4).